The sequence spans 399 residues: Probable protein phosphatase 2C 28 (399 aa).

The PPM-type phosphatase domain occupies 48–356 (EFSMAVVQAN…DDITVIVVFL (309 aa)). The Mn(2+) site is built by D87, G88, D288, and D347.

The protein belongs to the PP2C family. Mg(2+) is required as a cofactor. Requires Mn(2+) as cofactor.

The catalysed reaction is O-phospho-L-seryl-[protein] + H2O = L-seryl-[protein] + phosphate. It carries out the reaction O-phospho-L-threonyl-[protein] + H2O = L-threonyl-[protein] + phosphate. The sequence is that of Probable protein phosphatase 2C 28 from Oryza sativa subsp. japonica (Rice).